Here is a 245-residue protein sequence, read N- to C-terminus: 8-amino-3,8-dideoxy-manno-octulosonate cytidylyltransferase (245 aa).

Belongs to the KdsB family.

Its subcellular location is the cytoplasm. The catalysed reaction is 8-amino-3,8-dideoxy-alpha-D-manno-octulosonate + CTP = CMP-8-amino-3,8-dideoxy-alpha-D-manno-oct-2-ulosonate + diphosphate. Its pathway is bacterial outer membrane biogenesis; lipopolysaccharide biosynthesis. Functionally, activates KDO8N (a required 8-carbon sugar) for incorporation into bacterial lipopolysaccharide in the Shewanella genus. This chain is 8-amino-3,8-dideoxy-manno-octulosonate cytidylyltransferase, found in Shewanella baltica (strain OS195).